Reading from the N-terminus, the 241-residue chain is 7-cyano-7-deazaguanine synthase (241 aa).

15 to 25 (FSGGQDSTTTL) is an ATP binding site. The Zn(2+) site is built by cysteine 203, cysteine 218, cysteine 221, and cysteine 224.

The protein belongs to the QueC family. Requires Zn(2+) as cofactor.

The catalysed reaction is 7-carboxy-7-deazaguanine + NH4(+) + ATP = 7-cyano-7-deazaguanine + ADP + phosphate + H2O + H(+). Its pathway is purine metabolism; 7-cyano-7-deazaguanine biosynthesis. Functionally, catalyzes the ATP-dependent conversion of 7-carboxy-7-deazaguanine (CDG) to 7-cyano-7-deazaguanine (preQ(0)). The polypeptide is 7-cyano-7-deazaguanine synthase (Azorhizobium caulinodans (strain ATCC 43989 / DSM 5975 / JCM 20966 / LMG 6465 / NBRC 14845 / NCIMB 13405 / ORS 571)).